The primary structure comprises 384 residues: Putative ankyrin repeat protein L72 (384 aa).

ANK repeat units lie at residues 88–117 (ADMC…NIKN), 119–146 (GNLL…KEFS), 171–200 (DHNV…ILSV), 202–231 (DDSL…DIES), 233–261 (NNYC…NPNN), 298–324 (ILYQ…AGIK), and 325–357 (PTNS…DINV).

The sequence is that of Putative ankyrin repeat protein L72 from Acanthamoeba polyphaga (Amoeba).